The chain runs to 539 residues: 2,3-bisphosphoglycerate-independent phosphoglycerate mutase (539 aa).

Positions 37 and 86 each coordinate Mn(2+). Serine 86 is an active-site residue. Residues histidine 147, 177-178 (RD), arginine 210, arginine 216, 284-287 (RADR), and lysine 359 contribute to the substrate site. Residues aspartate 426, histidine 430, aspartate 467, histidine 468, and histidine 485 each contribute to the Mn(2+) site.

It belongs to the BPG-independent phosphoglycerate mutase family. The cofactor is Mg(2+). Mn(2+) serves as cofactor. Expressed ubiquitously. High expression levels in the nerve ring region, intestine and body wall muscles.

It carries out the reaction (2R)-2-phosphoglycerate = (2R)-3-phosphoglycerate. It participates in carbohydrate degradation; glycolysis; pyruvate from D-glyceraldehyde 3-phosphate: step 3/5. With respect to regulation, activity is not affected by 2,3-bisphosphoglycerate. Functionally, catalyzes the interconversion of 2-phosphoglycerate and 3-phosphoglycerate. The chain is 2,3-bisphosphoglycerate-independent phosphoglycerate mutase from Caenorhabditis elegans.